Reading from the N-terminus, the 115-residue chain is NADH-ubiquinone oxidoreductase chain 3 (115 aa).

The next 3 membrane-spanning stretches (helical) occupy residues 3 to 23 (LMLV…IAFW), 55 to 75 (FFLV…LLPL), and 87 to 107 (VLIM…YEWI).

The protein belongs to the complex I subunit 3 family. Core subunit of respiratory chain NADH dehydrogenase (Complex I) which is composed of 45 different subunits. Interacts with TMEM186. Interacts with TMEM242.

It is found in the mitochondrion inner membrane. It carries out the reaction a ubiquinone + NADH + 5 H(+)(in) = a ubiquinol + NAD(+) + 4 H(+)(out). Core subunit of the mitochondrial membrane respiratory chain NADH dehydrogenase (Complex I) which catalyzes electron transfer from NADH through the respiratory chain, using ubiquinone as an electron acceptor. Essential for the catalytic activity of complex I. The protein is NADH-ubiquinone oxidoreductase chain 3 of Oryctolagus cuniculus (Rabbit).